The sequence spans 208 residues: Small ribosomal subunit protein uS4 (208 aa).

The region spanning 99–165 (RRLDNVVFQL…PRLKEILSSL (67 aa)) is the S4 RNA-binding domain.

It belongs to the universal ribosomal protein uS4 family. Part of the 30S ribosomal subunit. Contacts protein S5. The interaction surface between S4 and S5 is involved in control of translational fidelity.

Functionally, one of the primary rRNA binding proteins, it binds directly to 16S rRNA where it nucleates assembly of the body of the 30S subunit. Its function is as follows. With S5 and S12 plays an important role in translational accuracy. This chain is Small ribosomal subunit protein uS4, found in Desulfitobacterium hafniense (strain Y51).